The chain runs to 1049 residues: Self-sufficient cytochrome P450 monooxygenase CYP505E4 (1049 aa).

Cys405 lines the heme pocket. The disordered stretch occupies residues 462–492 (ATALSQHNMSAGATSSPGSSAHPAGNKNAQD). Over residues 471 to 486 (SAGATSSPGSSAHPAG) the composition is skewed to low complexity. One can recognise a Flavodoxin-like domain in the interval 499–640 (ISFFYGSNSG…DLEVWEETNL (142 aa)). FMN is bound by residues 505-509 (SNSGT) and 584-616 (VFGC…TRLT). An FAD-binding FR-type domain is found at 678-906 (RDLIEGKVTA…RPAKEAFHLP (229 aa)).

The protein in the N-terminal section; belongs to the cytochrome P450 family. Requires FAD as cofactor. FMN is required as a cofactor. Heme serves as cofactor.

The enzyme catalyses 2 oxidized [cytochrome P450] + NADPH = 2 reduced [cytochrome P450] + NADP(+) + H(+). The catalysed reaction is an organic molecule + reduced [NADPH--hemoprotein reductase] + O2 = an alcohol + oxidized [NADPH--hemoprotein reductase] + H2O + H(+). It catalyses the reaction dodecanoate + reduced [NADPH--hemoprotein reductase] + O2 = 5-hydroxydodecanoate + oxidized [NADPH--hemoprotein reductase] + H2O + H(+). It carries out the reaction tetradecanoate + reduced [NADPH--hemoprotein reductase] + O2 = 7-hydroxytetradecanoate + oxidized [NADPH--hemoprotein reductase] + H2O + H(+). The enzyme catalyses dodecan-1-ol + reduced [NADPH--hemoprotein reductase] + O2 = 1,5-dodecanediol + oxidized [NADPH--hemoprotein reductase] + H2O + H(+). The catalysed reaction is dodecan-1-ol + reduced [NADPH--hemoprotein reductase] + O2 = 1,4-dodecanediol + oxidized [NADPH--hemoprotein reductase] + H2O + H(+). It catalyses the reaction dodecan-1-ol + reduced [NADPH--hemoprotein reductase] + O2 = 1,6-dodecanediol + oxidized [NADPH--hemoprotein reductase] + H2O + H(+). Functionally, self-sufficient cytochrome P450 monooxygenase that catalyzes the regioselective in-chain hydroxylation of alkanes, fatty alcohols, and fatty acids at the omega-7 position. Performs hydroxylation of C10-C16 n-alkanes and C12 and C14 fatty alcohols; and thereby enables the one step biocatalytic synthesis of rare alcohols such as 5-dodecanol and 7-tetradecanol. Converts 1-dodecanol into 1,5-dodecanediol as major product with very little sub-terminally hydroxylated products with the 1,4-dodecanediol and 1,6-dodecanediol more abundant. Converts dodecanoic acid to 5-hydroxydodecanoic acid which can be further converted into delta-dodecalactone by lactonization of the 5-hydroxy acid at low pH. Also gives sub-terminal hydroxylation of dodecanoic acid with 9-hydroxydodecanoic acid being the second most abundant product. This chain is Self-sufficient cytochrome P450 monooxygenase CYP505E4, found in Penicillium freii.